We begin with the raw amino-acid sequence, 238 residues long: Ubiquinone biosynthesis O-methyltransferase (238 aa).

Residues Arg-40, Gly-59, Asp-80, and Met-124 each contribute to the S-adenosyl-L-methionine site.

This sequence belongs to the methyltransferase superfamily. UbiG/COQ3 family.

It catalyses the reaction a 3-demethylubiquinol + S-adenosyl-L-methionine = a ubiquinol + S-adenosyl-L-homocysteine + H(+). The enzyme catalyses a 3-(all-trans-polyprenyl)benzene-1,2-diol + S-adenosyl-L-methionine = a 2-methoxy-6-(all-trans-polyprenyl)phenol + S-adenosyl-L-homocysteine + H(+). It participates in cofactor biosynthesis; ubiquinone biosynthesis. In terms of biological role, O-methyltransferase that catalyzes the 2 O-methylation steps in the ubiquinone biosynthetic pathway. In Ralstonia nicotianae (strain ATCC BAA-1114 / GMI1000) (Ralstonia solanacearum), this protein is Ubiquinone biosynthesis O-methyltransferase.